Consider the following 224-residue polypeptide: UPF0758 protein Avin_02940 (224 aa).

Residues 102 to 224 enclose the MPN domain; the sequence is ALESPQAVRD…PLSMAEQGWL (123 aa). Positions 173, 175, and 186 each coordinate Zn(2+). A JAMM motif motif is present at residues 173-186; it reads HNHPSGIAEPSQAD.

It belongs to the UPF0758 family.

In Azotobacter vinelandii (strain DJ / ATCC BAA-1303), this protein is UPF0758 protein Avin_02940.